Reading from the N-terminus, the 977-residue chain is Synaptopodin 2-like protein (977 aa).

Residues 6 to 88 (EVLVTLSGGA…QLVLTVQRLA (83 aa)) form the PDZ domain. 3 disordered regions span residues 91–226 (GPVQ…GPLR), 317–352 (AGTG…QSDW), and 364–677 (AGSR…EDAL). A phosphoserine mark is found at S108 and S111. Over residues 109-123 (PLSPEPPGAPVPQPL) the composition is skewed to pro residues. A Phosphothreonine modification is found at T141. Phosphoserine is present on residues S143, S178, and S180. Over residues 183-192 (EPAPTIPGPP) the composition is skewed to pro residues. Residues 194–203 (QGDSRVSSPS) show a composition bias toward polar residues. A compositionally biased stretch (low complexity) spans 216–226 (EALLLPHGPLR). A phosphoserine mark is found at S345, S350, S374, S381, and S384. R386 bears the Omega-N-methylarginine mark. Pro residues predominate over residues 436–450 (PPSPLPAPVASPRPF). An omega-N-methylarginine mark is found at R466, R469, and R479. Polar residues predominate over residues 510 to 525 (LSSQGPTPLPSFTSGV). Composition is skewed to low complexity over residues 530 to 545 (PVSG…GPVT) and 572 to 595 (SAAA…ARPE). Residues 596–607 (APAPGPGAPEPP) show a composition bias toward pro residues. Phosphoserine is present on residues S670 and S678. The segment at 697 to 802 (TLPHVTPKTP…PSLPPSWKYS (106 aa)) is disordered. The segment covering 704-730 (KTPPPMAPKTPPPMTPKTPPPVAPKPP) has biased composition (pro residues). A phosphothreonine mark is found at T705 and T713. Position 757 is an omega-N-methylarginine (R757). Positions 781-796 (GLGPRPRSPSPTPSLP) are enriched in pro residues. Phosphoserine is present on residues S788 and S790. T792 is subject to Phosphothreonine. R806, R826, and R889 each carry omega-N-methylarginine. The residue at position 891 (S891) is a Phosphoserine. Phosphothreonine is present on residues T892 and T898. The residue at position 910 (R910) is an Omega-N-methylarginine. An Asymmetric dimethylarginine; alternate modification is found at R921. Residue R921 is modified to Omega-N-methylarginine; alternate. A disordered region spans residues 922-950 (TELASAPVPSPAPPPEAPRGLGASPSSCG). The span at 929-938 (VPSPAPPPEA) shows a compositional bias: pro residues. R955 and R957 each carry omega-N-methylarginine.

This sequence belongs to the synaptopodin family.

It is found in the cytoplasm. It localises to the cytoskeleton. Its function is as follows. Actin-associated protein that may play a role in modulating actin-based shape. The chain is Synaptopodin 2-like protein (SYNPO2L) from Homo sapiens (Human).